A 318-amino-acid chain; its full sequence is NAD(P)H-dependent D-xylose reductase (318 aa).

The active-site Proton donor is the tyrosine 48. Histidine 110 lines the substrate pocket. NAD(+) contacts are provided by residues 165–166 (SN), 214–223 (SNFGPLSFLE), and 270–280 (KSTFPNTLAVN).

This sequence belongs to the aldo/keto reductase family.

The enzyme catalyses xylitol + NAD(+) = D-xylose + NADH + H(+). It catalyses the reaction xylitol + NADP(+) = D-xylose + NADPH + H(+). It participates in carbohydrate metabolism; D-xylose degradation. In terms of biological role, reduces D-xylose into xylitol. Has a preference for NADPH, but can also utilize NADH as cosubstrate. This chain is NAD(P)H-dependent D-xylose reductase (XYL1), found in Pachysolen tannophilus (Yeast).